We begin with the raw amino-acid sequence, 644 residues long: Chaperone protein DnaK (644 aa).

Disordered regions lie at residues glutamine 490 to aspartate 533 and glutamate 570 to alanine 644. Residues glutamate 492–alanine 513 show a composition bias toward basic and acidic residues. The segment covering leucine 523–aspartate 533 has biased composition (acidic residues). A compositionally biased stretch (gly residues) spans glycine 588–glycine 622. The segment covering aspartate 624–alanine 644 has biased composition (acidic residues).

The protein belongs to the heat shock protein 70 family.

In terms of biological role, acts as a chaperone. This is Chaperone protein DnaK from Halorubrum lacusprofundi (strain ATCC 49239 / DSM 5036 / JCM 8891 / ACAM 34).